Consider the following 139-residue polypeptide: Antitoxin HicB 2 (139 aa).

The HTH cro/C1-type domain maps to 87 to 137 (MLQTRTSNAELARLLGTRPQEIQRIVSLSHSTKIDTIANALNALGKHLELV). Residues 96-113 (ELARLLGTRPQEIQRIVS) constitute a DNA-binding region (H-T-H motif).

Belongs to the HicB antitoxin family. Probably forms a complex with the probable mRNA interferase HicA2 (its cognate toxin); when complexed with HicA inhibits the toxin activity.

In terms of biological role, antitoxin component of a type II toxin-antitoxin (TA) system. Functions as an mRNA interferase antitoxin preventing effects of the HicA 2 toxin. This Photorhabdus laumondii subsp. laumondii (strain DSM 15139 / CIP 105565 / TT01) (Photorhabdus luminescens subsp. laumondii) protein is Antitoxin HicB 2 (hicB2).